The primary structure comprises 774 residues: DNA ligase 3 (774 aa).

Residues 1-25 (MPPKKRMKNGSSLKSTSKKGEKSRN) are disordered. The N6-AMP-lysine intermediate role is filled by Lys433.

This sequence belongs to the ATP-dependent DNA ligase family.

Its subcellular location is the nucleus. The enzyme catalyses ATP + (deoxyribonucleotide)n-3'-hydroxyl + 5'-phospho-(deoxyribonucleotide)m = (deoxyribonucleotide)n+m + AMP + diphosphate.. The sequence is that of DNA ligase 3 (adl1) from Schizosaccharomyces pombe (strain 972 / ATCC 24843) (Fission yeast).